A 414-amino-acid polypeptide reads, in one-letter code: MFSKDQTLAKTDAELWSAIQKENTRQQEHIELIASENYTSPAVMEAQGTQLTNKYAEGYPGKRYYGGCEYVDIVEQLAIDRLKQLYGADAANVQPNSGSQANQGVFLAVLKPGDTIMGMSLAEGGHLTHGMALNMSGKWFNVVSYGLNDKEEIDYDAMERLAREHKPKLIIAGASAYALRIDFERFAKIAKEIGAYFMVDMAHYAGLIAAGEYPNPVPFADFVTSTTHKSLRGPRGGFILMKAEHEKIINSAIFPGLQGGPLMHVIAGKAVAFKEALAPEFKTYQQQVVKNADALAKALIARGLRIVSNRTESHVMLVDLRAKKITGKDAENLLGSAHITCNKNAIPNDPEKPFVTSGIRLGSPAMTTRGFKEAEATKVGNLIADVLENPNDAATIERVKAEVKKLTDAFPVYG.

(6S)-5,6,7,8-tetrahydrofolate is bound by residues Leu-121 and 125–127 (GHL). At Lys-229 the chain carries N6-(pyridoxal phosphate)lysine.

It belongs to the SHMT family. As to quaternary structure, homodimer. The cofactor is pyridoxal 5'-phosphate.

It localises to the cytoplasm. It catalyses the reaction (6R)-5,10-methylene-5,6,7,8-tetrahydrofolate + glycine + H2O = (6S)-5,6,7,8-tetrahydrofolate + L-serine. It participates in one-carbon metabolism; tetrahydrofolate interconversion. It functions in the pathway amino-acid biosynthesis; glycine biosynthesis; glycine from L-serine: step 1/1. Catalyzes the reversible interconversion of serine and glycine with tetrahydrofolate (THF) serving as the one-carbon carrier. This reaction serves as the major source of one-carbon groups required for the biosynthesis of purines, thymidylate, methionine, and other important biomolecules. Also exhibits THF-independent aldolase activity toward beta-hydroxyamino acids, producing glycine and aldehydes, via a retro-aldol mechanism. The polypeptide is Serine hydroxymethyltransferase (Janthinobacterium sp. (strain Marseille) (Minibacterium massiliensis)).